The sequence spans 283 residues: Bifunctional protein FolD (283 aa).

Residues 164-166, serine 189, and isoleucine 230 each bind NADP(+); that span reads GRS.

This sequence belongs to the tetrahydrofolate dehydrogenase/cyclohydrolase family. As to quaternary structure, homodimer.

The enzyme catalyses (6R)-5,10-methylene-5,6,7,8-tetrahydrofolate + NADP(+) = (6R)-5,10-methenyltetrahydrofolate + NADPH. It carries out the reaction (6R)-5,10-methenyltetrahydrofolate + H2O = (6R)-10-formyltetrahydrofolate + H(+). It functions in the pathway one-carbon metabolism; tetrahydrofolate interconversion. In terms of biological role, catalyzes the oxidation of 5,10-methylenetetrahydrofolate to 5,10-methenyltetrahydrofolate and then the hydrolysis of 5,10-methenyltetrahydrofolate to 10-formyltetrahydrofolate. The polypeptide is Bifunctional protein FolD (Lactobacillus delbrueckii subsp. bulgaricus (strain ATCC BAA-365 / Lb-18)).